The primary structure comprises 559 residues: CRISPR-associated exonuclease Cas4/endonuclease Cas1 fusion (559 aa).

The tract at residues 1–198 is CRISPR-associated exonuclease Cas4; sequence MAETDGSIPL…RCSLVGICLP (198 aa). C22 is a [4Fe-4S] cluster binding site. Mn(2+) contacts are provided by D87 and D100. The [4Fe-4S] cluster site is built by C187, C190, and C196. The tract at residues 224 to 559 is CRISPR-associated endonuclease Cas1; the sequence is LYVQSPKAYV…IPAYPNFVTR (336 aa). Mn(2+) contacts are provided by E380, H451, and E466.

It in the N-terminal section; belongs to the CRISPR-associated exonuclease Cas4 family. This sequence in the C-terminal section; belongs to the CRISPR-associated endonuclease Cas1 family. As to quaternary structure, homodimer, forms a heterotetramer with a Cas2 homodimer. The cofactor is [4Fe-4S] cluster. Requires Mg(2+) as cofactor. Mn(2+) is required as a cofactor.

It carries out the reaction exonucleolytic cleavage in the 5'- to 3'-direction to yield nucleoside 3'-phosphates.. In terms of biological role, CRISPR (clustered regularly interspaced short palindromic repeat), is an adaptive immune system that provides protection against mobile genetic elements (viruses, transposable elements and conjugative plasmids). CRISPR clusters contain spacers, sequences complementary to antecedent mobile elements, and target invading nucleic acids. CRISPR clusters are transcribed and processed into CRISPR RNA (crRNA). The Cas4 region acts as a ssDNA exonuclease, while the Cas1 region acts as a dsDNA endonuclease. Involved in the integration of spacer DNA into the CRISPR cassette. The chain is CRISPR-associated exonuclease Cas4/endonuclease Cas1 fusion (cas4-cas1) from Geobacter sulfurreducens (strain ATCC 51573 / DSM 12127 / PCA).